The following is an 883-amino-acid chain: Alanine--tRNA ligase (883 aa).

Residues histidine 564, histidine 568, cysteine 666, and histidine 670 each contribute to the Zn(2+) site.

The protein belongs to the class-II aminoacyl-tRNA synthetase family. It depends on Zn(2+) as a cofactor.

It is found in the cytoplasm. The enzyme catalyses tRNA(Ala) + L-alanine + ATP = L-alanyl-tRNA(Ala) + AMP + diphosphate. In terms of biological role, catalyzes the attachment of alanine to tRNA(Ala) in a two-step reaction: alanine is first activated by ATP to form Ala-AMP and then transferred to the acceptor end of tRNA(Ala). Also edits incorrectly charged Ser-tRNA(Ala) and Gly-tRNA(Ala) via its editing domain. In Synechococcus sp. (strain JA-3-3Ab) (Cyanobacteria bacterium Yellowstone A-Prime), this protein is Alanine--tRNA ligase.